The primary structure comprises 653 residues: ATP-dependent zinc metalloprotease FtsH 1 (653 aa).

Residues methionine 1 to arginine 8 are Cytoplasmic-facing. Residues asparagine 9–lysine 29 traverse the membrane as a helical segment. Residues aspartate 30–asparagine 110 are Extracellular-facing. A helical transmembrane segment spans residues tryptophan 111–methionine 131. Residues methionine 132–serine 653 lie on the Cytoplasmic side of the membrane. Residue glycine 203–threonine 210 participates in ATP binding. Histidine 425 is a binding site for Zn(2+). Residue glutamate 426 is part of the active site. Histidine 429 and aspartate 501 together coordinate Zn(2+). The tract at residues glutamate 604–serine 653 is disordered. Residues histidine 624–proline 637 show a composition bias toward basic and acidic residues. The span at histidine 638–serine 653 shows a compositional bias: pro residues.

It in the central section; belongs to the AAA ATPase family. In the C-terminal section; belongs to the peptidase M41 family. Homohexamer. Zn(2+) serves as cofactor.

Its subcellular location is the cell membrane. In terms of biological role, acts as a processive, ATP-dependent zinc metallopeptidase for both cytoplasmic and membrane proteins. Plays a role in the quality control of integral membrane proteins. The protein is ATP-dependent zinc metalloprotease FtsH 1 of Sphaerobacter thermophilus (strain ATCC 49802 / DSM 20745 / KCCM 41009 / NCIMB 13125 / S 6022).